Here is a 121-residue protein sequence, read N- to C-terminus: Large ribosomal subunit protein uL14c (121 aa).

Belongs to the universal ribosomal protein uL14 family. Part of the 50S ribosomal subunit.

It localises to the plastid. The protein localises to the chloroplast. In terms of biological role, binds to 23S rRNA. The protein is Large ribosomal subunit protein uL14c of Guillardia theta (Cryptophyte).